A 431-amino-acid polypeptide reads, in one-letter code: MSTIIDVYAREVLDSRGNPTVEVEVYTESGAFGRAIVPSGASTGEHEAVELRDGDKSRYLGKGVVNAVNNVNEIIAPEIAGFDVTDQAGIDRAMIELDGTPNKGKLGANAILGVSMAVAHAAADFVGLPLYRYLGGFNAKQLPTPMMNIINGGSHADNNVDFQEFMILPVGAPTFKESIRMGAEVFHALKAVLHDKGLNTAVGDEGGFAPNLGSNREALEVIIEAIEKAGYKAGENVFLGMDVASSEFYNKETGKYDLAGEGRTGLTSAEMVDFYEELCKDFPIISIEDGLDENDWDGHKLLTERIGDKVQLVGDDLFVTNTQKLAEGIEKGISNSILIKVNQIGTLTETFEAIEMAKRAGYTAVVSHRSGETEDATIADIAVATNAGQIKTGSMSRTDRIAKYNQLLRIEDELGEVAVYDGVKSFYNIKR.

Gln163 contacts (2R)-2-phosphoglycerate. The active-site Proton donor is Glu205. Mg(2+) is bound by residues Asp242, Glu288, and Asp315. Positions 340, 369, 370, and 391 each coordinate (2R)-2-phosphoglycerate. Catalysis depends on Lys340, which acts as the Proton acceptor.

It belongs to the enolase family. It depends on Mg(2+) as a cofactor.

The protein localises to the cytoplasm. The protein resides in the secreted. Its subcellular location is the cell surface. It catalyses the reaction (2R)-2-phosphoglycerate = phosphoenolpyruvate + H2O. Its pathway is carbohydrate degradation; glycolysis; pyruvate from D-glyceraldehyde 3-phosphate: step 4/5. Its function is as follows. Catalyzes the reversible conversion of 2-phosphoglycerate (2-PG) into phosphoenolpyruvate (PEP). It is essential for the degradation of carbohydrates via glycolysis. In Bacillus cereus (strain B4264), this protein is Enolase.